We begin with the raw amino-acid sequence, 149 residues long: Large ribosomal subunit protein bL9 (149 aa).

This sequence belongs to the bacterial ribosomal protein bL9 family.

In terms of biological role, binds to the 23S rRNA. The chain is Large ribosomal subunit protein bL9 from Klebsiella pneumoniae subsp. pneumoniae (strain ATCC 700721 / MGH 78578).